The sequence spans 86 residues: Large ribosomal subunit protein bL27 (86 aa).

The tract at residues 1-21 is disordered; sequence MAHKKGASSSRNGRDSAAQRL.

This sequence belongs to the bacterial ribosomal protein bL27 family.

This Mycobacterium tuberculosis (strain CDC 1551 / Oshkosh) protein is Large ribosomal subunit protein bL27 (rpmA).